We begin with the raw amino-acid sequence, 325 residues long: ATP-dependent (S)-NAD(P)H-hydrate dehydratase (325 aa).

In terms of domain architecture, YjeF C-terminal spans 9-315 (LLKKVYNMVP…EHVHTAFLNV (307 aa)). (6S)-NADPHX contacts are provided by residues Gly119 and 172 to 178 (NVVEFGR). Residues 211–215 (KGAKD) and 230–239 (GGLKRSGGQG) contribute to the ATP site. Asp240 provides a ligand contact to (6S)-NADPHX.

It belongs to the NnrD/CARKD family. Requires Mg(2+) as cofactor.

It is found in the cytoplasm. It carries out the reaction (6S)-NADHX + ATP = ADP + phosphate + NADH + H(+). The enzyme catalyses (6S)-NADPHX + ATP = ADP + phosphate + NADPH + H(+). Its function is as follows. Catalyzes the dehydration of the S-form of NAD(P)HX at the expense of ATP, which is converted to ADP. Together with NAD(P)HX epimerase, which catalyzes the epimerization of the S- and R-forms, the enzyme allows the repair of both epimers of NAD(P)HX, a damaged form of NAD(P)H that is a result of enzymatic or heat-dependent hydration. In Phaeosphaeria nodorum (strain SN15 / ATCC MYA-4574 / FGSC 10173) (Glume blotch fungus), this protein is ATP-dependent (S)-NAD(P)H-hydrate dehydratase.